Reading from the N-terminus, the 631-residue chain is Dolichyl-diphosphooligosaccharide--protein glycosyltransferase subunit 2 (631 aa).

Positions 1 to 22 (MAPPGSSTVFLLALTIIASTWA) are cleaved as a signal peptide. The Lumenal segment spans residues 23–540 (LTPTHYLTKH…REPEKRPPTV (518 aa)). Asparagine 106 is a glycosylation site (N-linked (GlcNAc...) asparagine). Lysine 154 is covalently cross-linked (Glycyl lysine isopeptide (Lys-Gly) (interchain with G-Cter in ubiquitin)). The helical transmembrane segment at 541-561 (VSNTFTALILSPLLLLFALWI) threads the bilayer. Residues 562 to 571 (RIGANVSNFT) are Cytoplasmic-facing. A helical transmembrane segment spans residues 572–592 (FAPSTIIFHLGHAAMLGLMYV). Over 593 to 596 (YWTQ) the chain is Lumenal. A helical transmembrane segment spans residues 597–617 (LNMFQTLKYLAILGSVTFLAG). Over 618-631 (NRMLAQQAVKRTAH) the chain is Cytoplasmic.

The protein belongs to the SWP1 family. In terms of assembly, component of the oligosaccharyltransferase (OST) complex. OST exists in two different complex forms which contain common core subunits RPN1, RPN2, OST48, OST4, DAD1 and TMEM258, either STT3A or STT3B as catalytic subunits, and form-specific accessory subunits. STT3A complex assembly occurs through the formation of 3 subcomplexes. Subcomplex 1 contains RPN1 and TMEM258, subcomplex 2 contains the STT3A-specific subunits STT3A, DC2/OSTC, and KCP2 as well as the core subunit OST4, and subcomplex 3 contains RPN2, DAD1, and OST48. The STT3A complex can form stable complexes with the Sec61 complex or with both the Sec61 and TRAP complexes. Interacts with DDI2. Interacts with TMEM35A/NACHO. In terms of tissue distribution, expressed in all tissues tested.

The protein localises to the endoplasmic reticulum. The protein resides in the endoplasmic reticulum membrane. It participates in protein modification; protein glycosylation. In terms of biological role, subunit of the oligosaccharyl transferase (OST) complex that catalyzes the initial transfer of a defined glycan (Glc(3)Man(9)GlcNAc(2) in eukaryotes) from the lipid carrier dolichol-pyrophosphate to an asparagine residue within an Asn-X-Ser/Thr consensus motif in nascent polypeptide chains, the first step in protein N-glycosylation. N-glycosylation occurs cotranslationally and the complex associates with the Sec61 complex at the channel-forming translocon complex that mediates protein translocation across the endoplasmic reticulum (ER). All subunits are required for a maximal enzyme activity. This Homo sapiens (Human) protein is Dolichyl-diphosphooligosaccharide--protein glycosyltransferase subunit 2.